The sequence spans 226 residues: PKHD-type hydroxylase mma_3618 (226 aa).

One can recognise a Fe2OG dioxygenase domain in the interval 78–178 (RYMPPLFNRY…RISSFFWVQS (101 aa)). Fe cation contacts are provided by H96, D98, and H159. R169 contacts 2-oxoglutarate.

Requires Fe(2+) as cofactor. The cofactor is L-ascorbate.

This is PKHD-type hydroxylase mma_3618 from Janthinobacterium sp. (strain Marseille) (Minibacterium massiliensis).